Consider the following 384-residue polypeptide: tRNA-specific 2-thiouridylase MnmA (384 aa).

ATP is bound by residues G9 to S16 and M35. Residues N95–D97 form an interaction with target base in tRNA region. C100 acts as the Nucleophile in catalysis. C100 and C196 are disulfide-bonded. G124 contributes to the ATP binding site. An interaction with tRNA region spans residues K146–Q148. C196 acts as the Cysteine persulfide intermediate in catalysis. An interaction with tRNA region spans residues R308–Y309.

It belongs to the MnmA/TRMU family.

Its subcellular location is the cytoplasm. The enzyme catalyses S-sulfanyl-L-cysteinyl-[protein] + uridine(34) in tRNA + AH2 + ATP = 2-thiouridine(34) in tRNA + L-cysteinyl-[protein] + A + AMP + diphosphate + H(+). Functionally, catalyzes the 2-thiolation of uridine at the wobble position (U34) of tRNA, leading to the formation of s(2)U34. The sequence is that of tRNA-specific 2-thiouridylase MnmA from Burkholderia ambifaria (strain ATCC BAA-244 / DSM 16087 / CCUG 44356 / LMG 19182 / AMMD) (Burkholderia cepacia (strain AMMD)).